A 274-amino-acid chain; its full sequence is E3 ubiquitin-protein ligase complex SLX5-SLX8 subunit SLX8 (274 aa).

Disordered regions lie at residues 1 to 117 (MARR…GNNI) and 136 to 159 (ANTP…TNSK). Residues 13–28 (ENLRIKRVRLESVRQN) show a composition bias toward basic and acidic residues. S50 is subject to Phosphoserine. The residue at position 66 (T66) is a Phosphothreonine. The segment covering 66-75 (TSEEDGDDDL) has biased composition (acidic residues). S67 is modified (phosphoserine). Basic and acidic residues predominate over residues 97 to 108 (GNHDRETMHTEE). An RING-type zinc finger spans residues 206 to 250 (CPICFEPPETALMTLCGHVFCCPCLFQMVNSSRTCRQFGHCALCR).

Component of the heterodimeric SUMO-targeted ubiquitin ligase (STUbL) complex composed of SLX5 and SLX8.

The protein resides in the nucleus. The protein localises to the chromosome. It localises to the centromere. It is found in the kinetochore. The catalysed reaction is S-ubiquitinyl-[E2 ubiquitin-conjugating enzyme]-L-cysteine + [acceptor protein]-L-lysine = [E2 ubiquitin-conjugating enzyme]-L-cysteine + N(6)-ubiquitinyl-[acceptor protein]-L-lysine.. Its pathway is protein modification; protein ubiquitination. Functionally, component of the SUMO-targeted ubiquitin ligase (STUbL) complex SLX5/SLX8 that mediates ubiquitination and subsequent desumoylation of sumoylated proteins and proteins containing SUMO-like domains for their degradation. The STUbL complex SLX5/SLX8 stimulates ubiquitin conjugating enzymes, including UBC1, UBC4, UBC5 and UBC13-MMS2, and mediates the proteolytic down-regulation of sumoylated proteins. The STUbL complex SLX5/SLX8 is involved in ubiquitin-mediated degradation of histone variant CSE4, preventing mislocalization to euchromatin. The complex plays an essential role in maintenance of chromosome stability and links SUMO-dependent ubiquitination to a centromere-specific function during mitosis. The complex is involved in proteolysis of spindle positioning protein KAR9 and ensures correct spindle function by regulating levels of microtubule-associated proteins. During replication, the complex helps to prevent DNA lesions via recombination and has a role in localizing the DNA damage protein DCD2. The complex especially ubiquitinates the nuclease YEN1 and prevents persistent accumulation of a fraction of YEN1 associated with sites of activity in late G2/M and helps maintain the balance between pro- and anti-crossover pathways during homologous recombination. It is also involved in ubiquitin-mediated degradation of DNA repair proteins RAD52 and RAD57. Finally, the complex is recruited to distinct genomic hotspots of non-H2B protein ubiquitination (ub-hotspots) by the sumoylated transcription factor-like protein EUC1 where it ubiquitinates EUC1 and presumably other targets. In Saccharomyces cerevisiae (strain ATCC 204508 / S288c) (Baker's yeast), this protein is E3 ubiquitin-protein ligase complex SLX5-SLX8 subunit SLX8 (SLX8).